The primary structure comprises 391 residues: Autophagy-related protein 18d (391 aa).

The disordered stretch occupies residues 1 to 24 (MDPRRNFQPGGYDSRNTFTSGSFG). 4 WD repeats span residues 31 to 69 (SDEA…ETFR), 74 to 118 (DGGF…CISE), 203 to 243 (AHDS…RLQE), and 248 to 287 (VDRA…IGED).

This sequence belongs to the WD repeat PROPPIN family. As to quaternary structure, component of the PI(3,5)P2 regulatory complex at least composed of ATG18, SAC/FIG4, FAB1 and VAC14. As to expression, expressed in roots, stems, flowers and leaves.

Its subcellular location is the preautophagosomal structure membrane. It localises to the vacuole membrane. In terms of biological role, the PI(3,5)P2 regulatory complex regulates both the synthesis and turnover of phosphatidylinositol 3,5-bisphosphate (PtdIns(3,5)P2). Required for autophagy. In Arabidopsis thaliana (Mouse-ear cress), this protein is Autophagy-related protein 18d (ATG18D).